We begin with the raw amino-acid sequence, 407 residues long: Cysteine desulfurase (407 aa).

Lys-226 carries the post-translational modification N6-(pyridoxal phosphate)lysine. Catalysis depends on Cys-364, which acts as the Cysteine persulfide intermediate.

Belongs to the class-V pyridoxal-phosphate-dependent aminotransferase family. Csd subfamily. In terms of assembly, homodimer. Interacts with SufE and the SufBCD complex composed of SufB, SufC and SufD. The interaction with SufE is required to mediate the direct transfer of the sulfur atom from the S-sulfanylcysteine. Requires pyridoxal 5'-phosphate as cofactor.

Its subcellular location is the cytoplasm. It carries out the reaction (sulfur carrier)-H + L-cysteine = (sulfur carrier)-SH + L-alanine. It catalyses the reaction L-selenocysteine + AH2 = hydrogenselenide + L-alanine + A + H(+). It participates in cofactor biosynthesis; iron-sulfur cluster biosynthesis. Its function is as follows. Cysteine desulfurases mobilize the sulfur from L-cysteine to yield L-alanine, an essential step in sulfur metabolism for biosynthesis of a variety of sulfur-containing biomolecules. Component of the suf operon, which is activated and required under specific conditions such as oxidative stress and iron limitation. Acts as a potent selenocysteine lyase in vitro, that mobilizes selenium from L-selenocysteine. Selenocysteine lyase activity is however unsure in vivo. The chain is Cysteine desulfurase from Pectobacterium atrosepticum (strain SCRI 1043 / ATCC BAA-672) (Erwinia carotovora subsp. atroseptica).